The following is a 330-amino-acid chain: Putative F-box protein At1g57690 (330 aa).

Residues 25–72 (VDIISSLPDVILQHILFSFQTKYAIRTSVLSKRWRHEADAINKALSQY) enclose the F-box domain.

This is Putative F-box protein At1g57690 from Arabidopsis thaliana (Mouse-ear cress).